A 1058-amino-acid chain; its full sequence is Bromodomain-containing protein 1 (1058 aa).

Basic residues predominate over residues 1-12 (MRRKGRCHRGSA). The interval 1 to 25 (MRRKGRCHRGSAARHPSSPCSIKHS) is disordered. The interval 31 to 80 (LTYAQAQRMVEIEIEGRLHRISIFDPLEIILEDDLTAQEMSECNSNKENS) is interaction with KAT7/HBO1 and histones. S128 bears the Phosphoserine mark. The PHD-type 1 zinc-finger motif lies at 214-264 (DAVCCICMDGECQNSNVILFCDMCNLAVHQECYGVPYIPEGQWLCRHCLQS). Residues 268-301 (PADCVLCPNKGGAFKKTDDDRWGHVVCALWIPEV) form a C2HC pre-PHD-type zinc finger. The PHD-type 2 zinc finger occupies 325–389 (LTCYLCKQKG…RKTAYCDVHT (65 aa)). K368, K516, and K519 each carry N6-acetyllysine. Residues K554 and K594 each participate in a glycyl lysine isopeptide (Lys-Gly) (interchain with G-Cter in SUMO2) cross-link. The Bromo domain occupies 562–666 (LRLTPLTVLL…DQGGVVLRQA (105 aa)). Polar residues predominate over residues 754 to 763 (KLSQQHSQAP). 2 disordered regions span residues 754 to 776 (KLSQ…EDEA) and 791 to 847 (LETL…AAPR). A Phosphoserine modification is found at S803. At K903 the chain carries N6-acetyllysine. One can recognise a PWWP domain in the interval 929–1012 (PLKVVWAKCS…KSKMVPLGVD (84 aa)). S1052 and S1055 each carry phosphoserine.

In terms of assembly, component of some HBO1 complexes composed of KAT7/HBO1, MEAF6, ING4 and BRD1/BRPF2. Component of the MOZ/MORF complex composed at least of ING5, KAT6A, KAT6B, MEAF6 and one of BRPF1, BRD1/BRPF2 and BRPF3. Interacts (via PHD-type zinc finger domain) with unmodified histone H3. Interacts (via PWWP domain) with dimethylated and trimethylated 'Lys-79' on histone H3.

It localises to the nucleus. Its subcellular location is the chromosome. Its function is as follows. Scaffold subunit of various histone acetyltransferase (HAT) complexes, such as the MOZ/MORF and HBO1 complexes, that acts as a regulator of hematopoiesis. Plays a key role in HBO1 complex by directing KAT7/HBO1 specificity towards histone H3 'Lys-14' acetylation (H3K14ac), thereby promoting erythroid differentiation. The polypeptide is Bromodomain-containing protein 1 (Mus musculus (Mouse)).